Consider the following 732-residue polypeptide: Putative pectinesterase/pectinesterase inhibitor 28 (732 aa).

Residues Val17–Val37 form a helical membrane-spanning segment. Residues Asn40, Asn93, Asn278, and Asn297 are each glycosylated (N-linked (GlcNAc...) asparagine). Positions Thr51–Met204 are pectinesterase inhibitor 28. Residues Asp252 to Asp548 form a pectinesterase 28 region. Thr327 and Gln357 together coordinate substrate. Catalysis depends on Asp380, which acts as the Proton donor; for pectinesterase activity. Cys394 and Cys414 form a disulfide bridge. Asp401 acts as the Nucleophile; for pectinesterase activity in catalysis. N-linked (GlcNAc...) asparagine glycosylation occurs at Asn413. Residues Arg469 and Trp471 each coordinate substrate. N-linked (GlcNAc...) asparagine glycosylation is found at Asn566, Asn570, and Asn581. Low complexity-rich tracts occupy residues Asn570–Ser620 and Pro633–Gly732. The tract at residues Asn570–Gly732 is disordered.

It in the N-terminal section; belongs to the PMEI family. This sequence in the C-terminal section; belongs to the pectinesterase family. As to expression, expressed in flower buds.

It is found in the membrane. It carries out the reaction [(1-&gt;4)-alpha-D-galacturonosyl methyl ester](n) + n H2O = [(1-&gt;4)-alpha-D-galacturonosyl](n) + n methanol + n H(+). It participates in glycan metabolism; pectin degradation; 2-dehydro-3-deoxy-D-gluconate from pectin: step 1/5. In terms of biological role, acts in the modification of cell walls via demethylesterification of cell wall pectin. The polypeptide is Putative pectinesterase/pectinesterase inhibitor 28 (PME28) (Arabidopsis thaliana (Mouse-ear cress)).